We begin with the raw amino-acid sequence, 942 residues long: ATP-dependent RNA helicase DDX42 (942 aa).

Residues Met-1–Gly-18 are compositionally biased toward gly residues. The tract at residues Met-1–Asp-114 is disordered. At Lys-5 the chain carries N6-acetyllysine. Omega-N-methylarginine is present on Arg-12. Residues Ser-35–Ala-52 show a composition bias toward low complexity. Ser-58 is subject to Phosphoserine. Acidic residues predominate over residues Asp-70 to Ser-84. A phosphoserine mark is found at Ser-96, Ser-104, Ser-109, and Ser-111. Residues Leu-116–Gln-157 adopt a coiled-coil conformation. The segment at Glu-182–Ile-203 is disordered. Phosphoserine is present on Ser-185. The Q motif signature appears at Ser-253 to Cys-281. The Helicase ATP-binding domain maps to Val-284–Val-459. Ala-297 to Thr-304 lines the ATP pocket. Residues Asp-407 to Asp-410 carry the DEAD box motif. The Helicase C-terminal domain occupies Trp-487–Ala-632. Composition is skewed to polar residues over residues Leu-737–Thr-760 and Gly-786–Glu-798. 2 disordered regions span residues Leu-737–Gly-762 and Gly-783–Ser-942. A necessary for interaction with TP53BP2 region spans residues Asn-738–Arg-833. A Phosphoserine modification is found at Ser-754. Over residues Ser-820 to Ala-924 the composition is skewed to basic and acidic residues. Residue Lys-899 forms a Glycyl lysine isopeptide (Lys-Gly) (interchain with G-Cter in SUMO2) linkage.

Belongs to the DEAD box helicase family. DDX42 subfamily. In terms of assembly, transient component of the SF3B subcomplex of the 17S U2 SnRNP complex. Interacts (via the C-terminus) with TP53BP2; the interaction is not inhibitied by TP53BP2 ubiquitination and is independent of p53/TP53.

The protein resides in the cytoplasm. It localises to the nucleus. The enzyme catalyses ATP + H2O = ADP + phosphate + H(+). ATP-dependent RNA helicase that binds to partially double-stranded RNAs (dsRNAs) in order to unwind RNA secondary structures. Unwinding is promoted in the presence of single-strand binding proteins. Also mediates RNA duplex formation thereby displacing the single-strand RNA binding protein. ATP and ADP modulate its activity: ATP binding and hydrolysis by DDX42 triggers RNA strand separation, whereas the ADP-bound form of the protein triggers annealing of complementary RNA strands. Required for assembly of the 17S U2 SnRNP complex of the spliceosome, a large ribonucleoprotein complex that removes introns from transcribed pre-mRNAs: DDX42 associates transiently with the SF3B subcomplex of the 17S U2 SnRNP complex and is released after fulfilling its role in the assembly of 17S U2 SnRNP. Involved in the survival of cells by interacting with TP53BP2 and thereby counteracting the apoptosis-stimulating activity of TP53BP2. Relocalizes TP53BP2 to the cytoplasm. In Pongo abelii (Sumatran orangutan), this protein is ATP-dependent RNA helicase DDX42 (DDX42).